Here is a 191-residue protein sequence, read N- to C-terminus: Putative RNA-binding protein EEED8.4 (191 aa).

The region spanning K55–T132 is the RRM domain. Residues G136–P160 form a disordered region.

The chain is Putative RNA-binding protein EEED8.4 from Caenorhabditis elegans.